A 133-amino-acid chain; its full sequence is Small ribosomal subunit protein uS8 (133 aa).

Belongs to the universal ribosomal protein uS8 family. As to quaternary structure, part of the 30S ribosomal subunit. Contacts proteins S5 and S12.

Its function is as follows. One of the primary rRNA binding proteins, it binds directly to 16S rRNA central domain where it helps coordinate assembly of the platform of the 30S subunit. The sequence is that of Small ribosomal subunit protein uS8 from Deinococcus geothermalis (strain DSM 11300 / CIP 105573 / AG-3a).